The sequence spans 907 residues: TBC1 domain family member 30 (907 aa).

Residues 51-74 are disordered; sequence ASETQDNGNKSGGDEIDVSLCDSQ. In terms of domain architecture, Rab-GAP TBC spans 243–451; the sequence is GIPKEWRKRV…KIWDSVFFEG (209 aa). Residues 583 to 645 adopt a coiled-coil conformation; that stretch reads QKQIKDQKEE…QQYSRIKKRQ (63 aa). 3 disordered regions span residues 731–781, 812–859, and 872–907; these read AKGE…LDRT, ELSP…SPFP, and NLGL…SKKR. Positions 749–762 are enriched in basic and acidic residues; that stretch reads EVPKDQPDTSKETE. Low complexity predominate over residues 831-843; the sequence is ESQSDSHSSSSES. Residues 892-907 are compositionally biased toward polar residues; the sequence is KTFNKAANGTTGSKKR.

In terms of biological role, may act as a GTPase-activating protein for Rab family protein(s). This Xenopus tropicalis (Western clawed frog) protein is TBC1 domain family member 30 (tbc1d30).